A 214-amino-acid polypeptide reads, in one-letter code: Ras-related protein RABA5c (214 aa).

Residue 19–26 (GDSAVGKS) participates in GTP binding. The Effector region signature appears at 41 to 49 (SKATIGVEF). GTP-binding positions include 67-71 (DTAGQ), 125-128 (NKCD), and 155-156 (SA). Residues Cys-211 and Cys-212 are each lipidated (S-geranylgeranyl cysteine).

Belongs to the small GTPase superfamily. Rab family. Interacts (via C-terminus) with GDI1. Interacts with PUX8/SAY1. In terms of tissue distribution, expressed in roots and actively dividing cells.

The protein localises to the golgi apparatus membrane. Its subcellular location is the golgi apparatus. It is found in the trans-Golgi network membrane. It localises to the cell membrane. Intracellular vesicle trafficking and protein transport. Binds GTP and GDP and possesses intrinsic GTPase activity. This chain is Ras-related protein RABA5c (RABA5C), found in Arabidopsis thaliana (Mouse-ear cress).